A 229-amino-acid chain; its full sequence is Glycerol-3-phosphate acyltransferase (229 aa).

A run of 6 helical transmembrane segments spans residues 2-22 (WSLTVILLISYFLGSIPGALW), 56-76 (LATVVDFGKGFLAAGVVASVI), 93-113 (FVVLGLLAGVGAVIGHMYPIF), 129-149 (LFALTPLTMAITLAVFVAVLL), 151-171 (SRYVSLSSITAAVAFPTIVAL), and 178-198 (ADLDPSLLVFGGLLALSIVVA).

It belongs to the PlsY family. Probably interacts with PlsX.

It localises to the cell inner membrane. The enzyme catalyses an acyl phosphate + sn-glycerol 3-phosphate = a 1-acyl-sn-glycero-3-phosphate + phosphate. It participates in lipid metabolism; phospholipid metabolism. Its function is as follows. Catalyzes the transfer of an acyl group from acyl-phosphate (acyl-PO(4)) to glycerol-3-phosphate (G3P) to form lysophosphatidic acid (LPA). This enzyme utilizes acyl-phosphate as fatty acyl donor, but not acyl-CoA or acyl-ACP. This chain is Glycerol-3-phosphate acyltransferase, found in Salinibacter ruber (strain DSM 13855 / M31).